The primary structure comprises 445 residues: Phospho-alpha-glucosidase PagL (445 aa).

Residue 4–71 coordinates NAD(+); it reads YSICIVGGGS…ELEEVIWTTD (68 aa). Arg-94 and Asn-148 together coordinate substrate. Cys-171 contributes to the Mn(2+) binding site. Catalysis depends on Asp-172, which acts as the Proton donor. Residue His-201 participates in Mn(2+) binding. The Proton acceptor role is filled by Tyr-264. A substrate-binding site is contributed by Arg-284.

This sequence belongs to the glycosyl hydrolase 4 family. As to quaternary structure, homotetramer. NAD(+) is required as a cofactor. Requires Mn(2+) as cofactor.

Functionally, phospho-alpha-glucosidase that catalyzes the hydrolysis of p-nitrophenyl-alpha-D-glucopyranoside 6-phosphate, but is not able to cleave 'natural' phospho-alpha-glucosides produced via the phosphoenolpyruvate-dependent sugar phosphotransferase system (PEP-PTS). The polypeptide is Phospho-alpha-glucosidase PagL (pagL) (Clostridium acetobutylicum (strain ATCC 824 / DSM 792 / JCM 1419 / IAM 19013 / LMG 5710 / NBRC 13948 / NRRL B-527 / VKM B-1787 / 2291 / W)).